The primary structure comprises 515 residues: MMRDSLGPFRTFTLLTVGLLLSLFVIKTVKHRRRYHGLPTPPHNMLLGNLGVVLAEILASPEGFFHLFCVENIRRKYNMPSVFYLDLWPILPSIMVVAEPVVAKHMTQVQPLQRERFSPNLFSPLLTAEFILAMEQKNWKKENPALNAALTSTRVNEATSLLFPSLHSLRSRLHSISQSGKQYPIKDLLISYIIEVGGVIQLGGSFDLLAETSALDPIIKQSLDMMGWNPVKRYICSKEIKQRTDCLNRVLVATVQNTVQTGESGMMSQSPIYLAHVEQLASGRMDHAESIAYLVNTMKVIILASVVTAGAASYCYLFLHKYPDCLREMREEHDRVFSPDRTQTWELLQKEPHRINSLHFTLAVVKETLRLIGVGGVFKKLKTEEFLETEGNVYPVVCNVAFICHLAMGRRADLFPDPDAFRPHRFLPGANPPIPADSFRPFEKGQLSCPGQTLALKSLVLLLLTTSREFDLVPVFPKGAPRAAEYLGGEGYPEFHIGPHVNKGMPVMVHTRVDA.

The next 4 helical transmembrane spans lie at 6-26 (LGPFRTFTLLTVGLLLSLFVI), 50-70 (LGVVLAEILASPEGFFHLFCV), 82-102 (VFYLDLWPILPSIMVVAEPVV), and 300-320 (VIILASVVTAGAASYCYLFLH). Cys449 provides a ligand contact to heme.

This sequence belongs to the cytochrome P450 family. It depends on heme as a cofactor.

The protein localises to the membrane. It functions in the pathway secondary metabolite biosynthesis. Functionally, cytochrome P450 monooxygenase; part of the gene cluster that mediates the biosynthesis of the indole diterpenes penitrems. The geranylgeranyl diphosphate (GGPP) synthase ptmG catalyzes the first step in penitrem biosynthesis via conversion of farnesyl pyrophosphate and isopentyl pyrophosphate into geranylgeranyl pyrophosphate (GGPP). Condensation of indole-3-glycerol phosphate with GGPP by the prenyl transferase ptmC then forms 3-geranylgeranylindole (3-GGI). Epoxidation by the FAD-dependent monooxygenase ptmM leads to a epoxidized-GGI that is substrate of the terpene cyclase ptmB for cyclization to yield paspaline. Paspaline is subsequently converted to 13-desoxypaxilline by the cytochrome P450 monooxygenase ptmP, the latter being then converted to paxilline by the cytochrome P450 monooxygenase ptmQ. Paxilline is converted to beta-paxitriol via C-10 ketoreduction by the short-chain dehydrogenase ptmH which can be monoprenylated at the C-20 by the indole diterpene prenyltransferase ptmD. A two-step elimination (acetylation and elimination) process performed by the O-acetyltransferase ptmV and ptmI leads to the production of the prenylated form of penijanthine. The FAD-linked oxidoreductase ptmO then converts the prenylated form of penijanthine into PC-M5 which is in turn transformed into PC-M4 by the aromatic dimethylallyltransferase ptmE. Five sequential oxidative transformations performed by the cytochrome P450 monooxygenases ptmK, ptmU, ptmL, ptmN and ptmJ yield the various penitrem compounds. PtmK, ptmU and ptmM are involved in the formation of the key bicyclic ring of penitrem C via the formation of the intermediates secopenitrem D and penitrem D. PtmL catalyzes the epoxidation of penitrem D and C to yield penitrem B and F, respectively. PtmJ catalyzes the last benzylic hydroxylation to convert penitrem B to prenitrem E and penitrem F to penitrem A. This chain is Cytochrome P450 monooxygenase ptmJ, found in Penicillium ochrochloron.